The sequence spans 164 residues: SsrA-binding protein (164 aa).

This sequence belongs to the SmpB family.

Its subcellular location is the cytoplasm. Required for rescue of stalled ribosomes mediated by trans-translation. Binds to transfer-messenger RNA (tmRNA), required for stable association of tmRNA with ribosomes. tmRNA and SmpB together mimic tRNA shape, replacing the anticodon stem-loop with SmpB. tmRNA is encoded by the ssrA gene; the 2 termini fold to resemble tRNA(Ala) and it encodes a 'tag peptide', a short internal open reading frame. During trans-translation Ala-aminoacylated tmRNA acts like a tRNA, entering the A-site of stalled ribosomes, displacing the stalled mRNA. The ribosome then switches to translate the ORF on the tmRNA; the nascent peptide is terminated with the 'tag peptide' encoded by the tmRNA and targeted for degradation. The ribosome is freed to recommence translation, which seems to be the essential function of trans-translation. The polypeptide is SsrA-binding protein (Synechococcus sp. (strain CC9311)).